The following is a 397-amino-acid chain: Tryptophan synthase beta chain (397 aa).

N6-(pyridoxal phosphate)lysine is present on lysine 87.

The protein belongs to the TrpB family. Tetramer of two alpha and two beta chains. Requires pyridoxal 5'-phosphate as cofactor.

The enzyme catalyses (1S,2R)-1-C-(indol-3-yl)glycerol 3-phosphate + L-serine = D-glyceraldehyde 3-phosphate + L-tryptophan + H2O. It participates in amino-acid biosynthesis; L-tryptophan biosynthesis; L-tryptophan from chorismate: step 5/5. The beta subunit is responsible for the synthesis of L-tryptophan from indole and L-serine. The chain is Tryptophan synthase beta chain from Escherichia coli O139:H28 (strain E24377A / ETEC).